The chain runs to 731 residues: Zinc finger protein 615 (731 aa).

A KRAB domain is found at 8-79; that stretch reads LTLEDVAVDF…EDEIYSRICS (72 aa). 19 C2H2-type zinc fingers span residues 204-226, 232-254, 260-282, 288-310, 316-338, 344-366, 372-394, 400-422, 428-450, 456-478, 484-506, 512-534, 540-562, 568-590, 596-618, 624-646, 652-674, 680-702, and 708-730; these read HVCS…QRVH, HVCS…QRTH, YECT…QKTH, YTCS…QRTH, HGCS…QKTH, YICS…HRTH, FICN…QQTH, YKCN…QRTH, YVCT…QRTH, YICN…QRTH, YVCG…QRTH, YICN…RRTH, YVCS…QRTH, YICN…QQTH, YKCN…QRFH, FACT…QRIH, YKCS…QRKH, and YGCS…RRIH.

The protein belongs to the krueppel C2H2-type zinc-finger protein family.

It localises to the nucleus. May be involved in transcriptional regulation. The sequence is that of Zinc finger protein 615 (ZNF615) from Homo sapiens (Human).